Consider the following 402-residue polypeptide: Imidazolonepropionase (402 aa).

Fe(3+) is bound by residues histidine 66 and histidine 68. 2 residues coordinate Zn(2+): histidine 66 and histidine 68. 4-imidazolone-5-propanoate-binding residues include arginine 75, tyrosine 138, and histidine 171. Tyrosine 138 contacts N-formimidoyl-L-glutamate. Histidine 236 lines the Fe(3+) pocket. Histidine 236 is a binding site for Zn(2+). Residue glutamine 239 coordinates 4-imidazolone-5-propanoate. A Fe(3+)-binding site is contributed by aspartate 311. Aspartate 311 lines the Zn(2+) pocket. Residues asparagine 313 and glycine 315 each contribute to the N-formimidoyl-L-glutamate site. A 4-imidazolone-5-propanoate-binding site is contributed by threonine 316.

Belongs to the metallo-dependent hydrolases superfamily. HutI family. It depends on Zn(2+) as a cofactor. Fe(3+) is required as a cofactor.

Its subcellular location is the cytoplasm. It catalyses the reaction 4-imidazolone-5-propanoate + H2O = N-formimidoyl-L-glutamate. The protein operates within amino-acid degradation; L-histidine degradation into L-glutamate; N-formimidoyl-L-glutamate from L-histidine: step 3/3. Functionally, catalyzes the hydrolytic cleavage of the carbon-nitrogen bond in imidazolone-5-propanoate to yield N-formimidoyl-L-glutamate. It is the third step in the universal histidine degradation pathway. In Pseudomonas aeruginosa (strain UCBPP-PA14), this protein is Imidazolonepropionase.